The chain runs to 263 residues: Trans-aconitate 2-methyltransferase (263 aa).

Belongs to the methyltransferase superfamily. Tam family.

The protein localises to the cytoplasm. The enzyme catalyses trans-aconitate + S-adenosyl-L-methionine = (E)-3-(methoxycarbonyl)pent-2-enedioate + S-adenosyl-L-homocysteine. Its function is as follows. Catalyzes the S-adenosylmethionine monomethyl esterification of trans-aconitate. The sequence is that of Trans-aconitate 2-methyltransferase from Mycobacterium ulcerans (strain Agy99).